Here is a 1063-residue protein sequence, read N- to C-terminus: Structural polyprotein (1063 aa).

A disordered region spans residues 23–131 (LRAELAAGAS…LGPPTNPFQA (109 aa)). The human C1QBP/SF2P32-binding stretch occupies residues 30-69 (GASQLRRPRPPRQRDSSTSGDDSGRDSGGPRRRRGNRGRG). Serine 46 is modified (phosphoserine; by host). The segment covering 59 to 69 (PRRRRGNRGRG) has biased composition (basic residues). The span at 70–87 (QRKDWSKAPPPPEERQES) shows a compositional bias: basic and acidic residues. A compositionally biased stretch (pro residues) spans 93–107 (APKPPRAPPQPPQPP). A disulfide bond links cysteine 153 and cysteine 197. Positions 279 to 300 (GAPQVFLAGLLLAAVAVGTARA) are functions as E2 signal peptide. Over 301-534 (GLQPRTDIAA…LWLATANALS (234 aa)) the chain is Extracellular. The interval 305–327 (RTDIAAPPAPPQAPRAHGKHYGH) is disordered. N-linked (GlcNAc...) asparagine; by host glycosylation is found at asparagine 353, asparagine 371, asparagine 410, and asparagine 429. A helical transmembrane segment spans residues 535 to 555 (LDHALAAVVLLVPWVLIFMLC). Over 556 to 582 (RRACRRRGAAAALTAVVLQGYNPPAYG) the chain is Cytoplasmic. The functions as E1 signal peptide stretch occupies residues 563–582 (GAAAALTAVVLQGYNPPAYG). Residues 583–1028 (EEAFTYLCTA…QTWAEWAAAH (446 aa)) lie on the Extracellular side of the membrane. 8 disulfides stabilise this stretch: cysteine 590-cysteine 595, cysteine 619-cysteine 824, cysteine 641-cysteine 653, cysteine 699-cysteine 712, cysteine 758-cysteine 767, cysteine 807-cysteine 817, cysteine 931-cysteine 934, and cysteine 950-cysteine 983. A glycan (N-linked (GlcNAc...) asparagine; by host) is linked at asparagine 658. Ca(2+) contacts are provided by asparagine 670 and alanine 671. Aspartate 718 and threonine 719 together coordinate Ca(2+). N-linked (GlcNAc...) asparagine; by host glycosylation is found at asparagine 759 and asparagine 791. Residues threonine 1011 and threonine 1012 are each glycosylated (O-linked (GalNAc...) threonine; by host). A helical transmembrane segment spans residues 1029–1049 (WWQLTLGAICALLLAGLLACC). The Extracellular segment spans residues 1050–1063 (AKCLYYLRGAIAPR).

Homodimer; further assembles into homooligomer. Interacts with human C1QBP. Interacts (via N-terminus) with protease/methyltransferase p150. As to quaternary structure, heterodimer with spike glycoprotein E2. In terms of assembly, heterodimer with spike glycoprotein E1. Structural polyprotein: Specific enzymatic cleavages in vivo yield mature proteins. Two signal peptidase-mediated cleavages within the polyprotein produce the structural proteins capsid, E2, and E1. The E2 signal peptide remains attached to the C-terminus of the capsid protein after cleavage by the signal peptidase. Another signal peptide at E2 C-terminus directs E1 to the ER, with a similar mechanism. In terms of processing, contains three N-linked oligosaccharides. Post-translationally, capsid is phosphorylated on Ser-46 by host. This phosphorylation negatively regulates capsid protein RNA-binding activity. Dephosphorylated by human PP1A.

It is found in the virion. The protein resides in the host cytoplasm. The protein localises to the host mitochondrion. Its subcellular location is the virion membrane. It localises to the host Golgi apparatus membrane. In terms of biological role, capsid protein interacts with genomic RNA and assembles into icosahedric core particles 65-70 nm in diameter. The resulting nucleocapsid eventually associates with the cytoplasmic domain of E2 at the cell membrane, leading to budding and formation of mature virions from host Golgi membranes. Phosphorylation negatively regulates RNA-binding activity, possibly delaying virion assembly during the viral replication phase. Capsid protein dimerizes and becomes disulfide-linked in the virion. Modulates genomic RNA replication. Modulates subgenomic RNA synthesis by interacting with human C1QBP/SF2P32. Induces both perinuclear clustering of mitochondria and the formation of electron-dense intermitochondrial plaques, both hallmarks of rubella virus infected cells. Induces apoptosis when expressed in transfected cells. Responsible for viral attachment to target host cell, by binding to the cell receptor. Its transport to the plasma membrane depends on interaction with E1 protein. The surface glycoproteins display an irregular helical organization and a pseudo-tetrameric inner nucleocapsid arrangement. Its function is as follows. Class II viral fusion protein. Fusion activity is inactive as long as E1 is bound to E2 in mature virion. After virus attachment to target cell and clathrin-mediated endocytosis, acidification of the endosome would induce dissociation of E1/E2 heterodimer and concomitant trimerization of the E1 subunits. This E1 homotrimer is fusion active, and promotes release of viral nucleocapsid in cytoplasm after endosome and viral membrane fusion. The cytoplasmic tail of spike glycoprotein E1 modulates virus release. The surface glycoproteins display an irregular helical organization and a pseudo-tetrameric inner nucleocapsid arrangement. This is Structural polyprotein from Rubella virus (strain BRD1) (RUBV).